A 175-amino-acid chain; its full sequence is Shikimate kinase (175 aa).

Residue 14-19 (GAGKST) coordinates ATP. Serine 18 provides a ligand contact to Mg(2+). 3 residues coordinate substrate: aspartate 36, arginine 60, and glycine 82. Arginine 120 contributes to the ATP binding site. Arginine 140 is a substrate binding site. Residue glutamine 157 coordinates ATP.

Belongs to the shikimate kinase family. As to quaternary structure, monomer. Mg(2+) is required as a cofactor.

It is found in the cytoplasm. It catalyses the reaction shikimate + ATP = 3-phosphoshikimate + ADP + H(+). It functions in the pathway metabolic intermediate biosynthesis; chorismate biosynthesis; chorismate from D-erythrose 4-phosphate and phosphoenolpyruvate: step 5/7. Catalyzes the specific phosphorylation of the 3-hydroxyl group of shikimic acid using ATP as a cosubstrate. This chain is Shikimate kinase, found in Histophilus somni (strain 2336) (Haemophilus somnus).